Consider the following 519-residue polypeptide: Sugar transport protein MST5 (519 aa).

Topologically, residues 1–18 are cytoplasmic; that stretch reads MAGGAMVQTVGGKTYPGK. Residues 19–39 traverse the membrane as a helical segment; sequence MTAFVFFTCLVASSGGLIFGY. At 40 to 80 the chain is on the extracellular side; sequence DIGISGGVTSMDSFLSEFFPSVYAQAKASKDTNQYCKFDSQ. Residues 81 to 101 form a helical membrane-spanning segment; the sequence is LLTLFTSSLYLAALATSFVAA. Topologically, residues 102–110 are cytoplasmic; that stretch reads WVTRVFGRK. A helical transmembrane segment spans residues 111 to 127; it reads WSMFCGGVTFLAGSALN. Gly128 is a topological domain (extracellular). A helical membrane pass occupies residues 129–149; it reads AATDVMMLILGRILLGIGVGF. Residues 150-167 are Cytoplasmic-facing; sequence ANQSVPLYLSEMAPANLR. The helical transmembrane segment at 168–188 threads the bilayer; it reads GMLNIGFQLMTTIGILSANLI. The Extracellular segment spans residues 189 to 202; the sequence is NYATSSIEGGWGWR. The helical transmembrane segment at 203–223 threads the bilayer; sequence IGLGLAGVPALIITLGALVLP. Topologically, residues 224 to 295 are cytoplasmic; that stretch reads DTPNSLIARG…IAILIPCFQQ (72 aa). The helical transmembrane segment at 296–316 threads the bilayer; sequence LTGINVIMFYAPVLFLTIGFA. Residues 317–321 are Extracellular-facing; sequence GDASL. Residues 322–342 traverse the membrane as a helical segment; the sequence is MSAVITGLVNMFATVVSIISV. Residues 343 to 357 are Cytoplasmic-facing; the sequence is DRLGRRVLFLQGGTQ. A helical membrane pass occupies residues 358–378; it reads MFISQVVVGTLIALQFGVAGV. Residues 379–386 lie on the Extracellular side of the membrane; sequence GEMSRSYA. Residues 387–407 form a helical membrane-spanning segment; it reads ILLVLFICMYVAGFAWSWGPL. Topologically, residues 408–426 are cytoplasmic; that stretch reads GWLVPSEVFALEIRSAGQS. The helical transmembrane segment at 427–447 threads the bilayer; it reads IAVCVNMMLTFVIGQAFLTML. Topologically, residues 448–451 are extracellular; sequence CHLK. A helical transmembrane segment spans residues 452 to 472; that stretch reads FGLFYFFAGWMLVMTTFVALF. Over 473-519 the chain is Cytoplasmic; that stretch reads LPETKGVPIEEMNHVWSRHWFWGSYVTAHDVAGAGAGGGGNRRSHNV.

Belongs to the major facilitator superfamily. Sugar transporter (TC 2.A.1.1) family. In terms of tissue distribution, expressed in panicles before heading. Expressed in flowers before pollination.

It localises to the membrane. Functionally, mediates active uptake of hexoses by sugar:proton symport. Can transport glucose, xylose and 3-O-methylglucose. May play a role at the early stage of seed development. The chain is Sugar transport protein MST5 from Oryza sativa subsp. japonica (Rice).